The primary structure comprises 165 residues: Choriogonadotropin subunit beta (165 aa).

The signal sequence occupies residues 1–20 (METLQGLLLWLLLSMGGAQA). Cystine bridges form between Cys-29–Cys-77, Cys-43–Cys-92, Cys-46–Cys-130, Cys-54–Cys-108, Cys-58–Cys-110, and Cys-113–Cys-120. 2 N-linked (GlcNAc...) asparagine glycosylation sites follow: Asn-33 and Asn-50. Residues 131 to 165 (DDPNLQASSSSKDPPPSPPSPSRLLEPAGTPFLPQ) are disordered. O-linked (GalNAc...) serine glycosylation is found at Ser-141, Ser-147, and Ser-152.

Belongs to the glycoprotein hormones subunit beta family. As to quaternary structure, heterodimer of a common alpha chain and a unique beta chain which confers biological specificity to thyrotropin, lutropin, follitropin and gonadotropin. As to expression, placenta.

The protein resides in the secreted. Stimulates the ovaries to synthesize the steroids that are essential for the maintenance of pregnancy. The protein is Choriogonadotropin subunit beta (CGB) of Papio anubis (Olive baboon).